The primary structure comprises 283 residues: 4-diphosphocytidyl-2-C-methyl-D-erythritol kinase (283 aa).

The active site involves Lys12. 99 to 109 (PLAAGIGGGSA) serves as a coordination point for ATP. Asp141 is an active-site residue.

This sequence belongs to the GHMP kinase family. IspE subfamily.

It carries out the reaction 4-CDP-2-C-methyl-D-erythritol + ATP = 4-CDP-2-C-methyl-D-erythritol 2-phosphate + ADP + H(+). It functions in the pathway isoprenoid biosynthesis; isopentenyl diphosphate biosynthesis via DXP pathway; isopentenyl diphosphate from 1-deoxy-D-xylulose 5-phosphate: step 3/6. Its function is as follows. Catalyzes the phosphorylation of the position 2 hydroxy group of 4-diphosphocytidyl-2C-methyl-D-erythritol. The protein is 4-diphosphocytidyl-2-C-methyl-D-erythritol kinase of Sphingopyxis alaskensis (strain DSM 13593 / LMG 18877 / RB2256) (Sphingomonas alaskensis).